A 426-amino-acid chain; its full sequence is Serine--tRNA ligase (426 aa).

233-235 is an L-serine binding site; sequence TAE. 264–266 serves as a coordination point for ATP; the sequence is RSE. E287 contributes to the L-serine binding site. Residue 351–354 coordinates ATP; that stretch reads EISS. Position 387 (S387) interacts with L-serine.

Belongs to the class-II aminoacyl-tRNA synthetase family. Type-1 seryl-tRNA synthetase subfamily. Homodimer. The tRNA molecule binds across the dimer.

It localises to the cytoplasm. The catalysed reaction is tRNA(Ser) + L-serine + ATP = L-seryl-tRNA(Ser) + AMP + diphosphate + H(+). It catalyses the reaction tRNA(Sec) + L-serine + ATP = L-seryl-tRNA(Sec) + AMP + diphosphate + H(+). Its pathway is aminoacyl-tRNA biosynthesis; selenocysteinyl-tRNA(Sec) biosynthesis; L-seryl-tRNA(Sec) from L-serine and tRNA(Sec): step 1/1. Catalyzes the attachment of serine to tRNA(Ser). Is also able to aminoacylate tRNA(Sec) with serine, to form the misacylated tRNA L-seryl-tRNA(Sec), which will be further converted into selenocysteinyl-tRNA(Sec). This is Serine--tRNA ligase from Pseudomonas putida (strain W619).